A 139-amino-acid polypeptide reads, in one-letter code: Large ribosomal subunit protein uL22 (139 aa).

Residues 118 to 139 (VEVESRPKKVASKSKSQKGSAR) form a disordered region. Basic residues predominate over residues 125–139 (KKVASKSKSQKGSAR).

It belongs to the universal ribosomal protein uL22 family. As to quaternary structure, part of the 50S ribosomal subunit.

Its function is as follows. This protein binds specifically to 23S rRNA; its binding is stimulated by other ribosomal proteins, e.g. L4, L17, and L20. It is important during the early stages of 50S assembly. It makes multiple contacts with different domains of the 23S rRNA in the assembled 50S subunit and ribosome. In terms of biological role, the globular domain of the protein is located near the polypeptide exit tunnel on the outside of the subunit, while an extended beta-hairpin is found that lines the wall of the exit tunnel in the center of the 70S ribosome. This is Large ribosomal subunit protein uL22 from Saccharopolyspora erythraea (strain ATCC 11635 / DSM 40517 / JCM 4748 / NBRC 13426 / NCIMB 8594 / NRRL 2338).